Here is a 101-residue protein sequence, read N- to C-terminus: Enhancer of yellow 2 transcription factor (101 aa).

This sequence belongs to the ENY2 family. As to quaternary structure, component of the nuclear pore complex (NPC)-associated AMEX complex (anchoring and mRNA export complex), composed of at least e(y)2 and xmas-2. Component of the SAGA transcription coactivator-HAT complexes, at least composed of Ada2b, e(y)2, Pcaf/Gcn5, Taf10 and Nipped-A/Trrap. Within the SAGA complex, e(y)2, Sgf11, and not/nonstop form an additional subcomplex of SAGA called the DUB module (deubiquitination module). Component of the THO complex, composed of at least e(y)2, HPR1, THO2, THOC5, THOC6 and THOC7. Interacts with e(y)1. Interacts with su(Hw) (via zinc fingers). Interacts with xmas-2; required for localization to the nuclear periphery. Interacts with the nuclear pore complex (NPC).

The protein resides in the nucleus. It localises to the nucleoplasm. The protein localises to the cytoplasm. Functionally, involved in mRNA export coupled transcription activation by association with both the AMEX and the SAGA complexes. The SAGA complex is a multiprotein complex that activates transcription by remodeling chromatin and mediating histone acetylation and deubiquitination. Within the SAGA complex, participates in a subcomplex that specifically deubiquitinates histone H2B. The SAGA complex is recruited to specific gene promoters by activators, where it is required for transcription. Required for nuclear receptor-mediated transactivation. Involved in transcription elongation by recruiting the THO complex onto nascent mRNA. The AMEX complex functions in docking export-competent ribonucleoprotein particles (mRNPs) to the nuclear entrance of the nuclear pore complex (nuclear basket). AMEX participates in mRNA export and accurate chromatin positioning in the nucleus by tethering genes to the nuclear periphery. The sequence is that of Enhancer of yellow 2 transcription factor from Drosophila yakuba (Fruit fly).